Consider the following 299-residue polypeptide: Probable lipid kinase YegS (299 aa).

The 132-residue stretch at Ala-2–Thr-133 folds into the DAGKc domain. Residues Thr-40, Gly-66 to Glu-72, and Thr-95 contribute to the ATP site. Mg(2+) contacts are provided by Leu-215, Asp-218, and Leu-220. Catalysis depends on Glu-271, which acts as the Proton acceptor.

It belongs to the diacylglycerol/lipid kinase family. YegS lipid kinase subfamily. Mg(2+) serves as cofactor. Ca(2+) is required as a cofactor.

The protein localises to the cytoplasm. Its function is as follows. Probably phosphorylates lipids; the in vivo substrate is unknown. The protein is Probable lipid kinase YegS of Escherichia coli O127:H6 (strain E2348/69 / EPEC).